Here is a 343-residue protein sequence, read N- to C-terminus: 4-hydroxythreonine-4-phosphate dehydrogenase (343 aa).

Residues His-141 and Thr-142 each contribute to the substrate site. 3 residues coordinate a divalent metal cation: His-175, His-220, and His-275. Substrate is bound by residues Lys-283, Asn-292, and Arg-301.

It belongs to the PdxA family. As to quaternary structure, homodimer. Requires Zn(2+) as cofactor. Mg(2+) is required as a cofactor. The cofactor is Co(2+).

The protein resides in the cytoplasm. It carries out the reaction 4-(phosphooxy)-L-threonine + NAD(+) = 3-amino-2-oxopropyl phosphate + CO2 + NADH. It participates in cofactor biosynthesis; pyridoxine 5'-phosphate biosynthesis; pyridoxine 5'-phosphate from D-erythrose 4-phosphate: step 4/5. Functionally, catalyzes the NAD(P)-dependent oxidation of 4-(phosphooxy)-L-threonine (HTP) into 2-amino-3-oxo-4-(phosphooxy)butyric acid which spontaneously decarboxylates to form 3-amino-2-oxopropyl phosphate (AHAP). This Janthinobacterium sp. (strain Marseille) (Minibacterium massiliensis) protein is 4-hydroxythreonine-4-phosphate dehydrogenase.